The following is a 68-amino-acid chain: Toxin Cg2 (68 aa).

The region spanning Lys-1–Ser-66 is the LCN-type CS-alpha/beta domain. 4 cysteine pairs are disulfide-bonded: Cys-12–Cys-65, Cys-16–Cys-41, Cys-25–Cys-46, and Cys-29–Cys-48.

The protein belongs to the long (4 C-C) scorpion toxin superfamily. Sodium channel inhibitor family. As to expression, expressed by the venom gland.

The protein resides in the secreted. In terms of biological role, binds to sodium channels (Nav) and inhibits them. This chain is Toxin Cg2, found in Centruroides gracilis (Slenderbrown scorpion).